We begin with the raw amino-acid sequence, 241 residues long: MPRCNNRAPAQMRPVRIIRHYVRHAEGSVLIEYGETRVICTASVIEKVPPFLKGAGQGWLTAEYGMLPRSTGERMQREAAKGKQSGRTMEIQRLIGRALRSILDLEKLGERTIQMDCDVIQADGGTRTASITGAFVALYDAIDYLRAERMISQNPIRDHVAAVSVGILKGQPLLDLDYLEDSGCDTDLNVVMTGSLGLVEVQGTAEKVVFSRQELDVMLNMAQQGLQELFDVQRKALETVA.

Residues R87 and 125-127 contribute to the phosphate site; that span reads GTR.

This sequence belongs to the RNase PH family. In terms of assembly, homohexameric ring arranged as a trimer of dimers.

The enzyme catalyses tRNA(n+1) + phosphate = tRNA(n) + a ribonucleoside 5'-diphosphate. In terms of biological role, phosphorolytic 3'-5' exoribonuclease that plays an important role in tRNA 3'-end maturation. Removes nucleotide residues following the 3'-CCA terminus of tRNAs; can also add nucleotides to the ends of RNA molecules by using nucleoside diphosphates as substrates, but this may not be physiologically important. Probably plays a role in initiation of 16S rRNA degradation (leading to ribosome degradation) during starvation. The chain is Ribonuclease PH from Nitrosomonas europaea (strain ATCC 19718 / CIP 103999 / KCTC 2705 / NBRC 14298).